A 176-amino-acid polypeptide reads, in one-letter code: Cytochrome b (176 aa).

3 consecutive transmembrane segments (helical) span residues 33 to 53 (FGSL…FLAM), 77 to 98 (WVLR…YLHV), and 113 to 133 (WNVG…GYVL). Histidine 83 and histidine 97 together coordinate heme b.

Belongs to the cytochrome b family. As to quaternary structure, the cytochrome bc1 complex contains 11 subunits: 3 respiratory subunits (MT-CYB, CYC1 and UQCRFS1), 2 core proteins (UQCRC1 and UQCRC2) and 6 low-molecular weight proteins (UQCRH/QCR6, UQCRB/QCR7, UQCRQ/QCR8, UQCR10/QCR9, UQCR11/QCR10 and a cleavage product of UQCRFS1). This cytochrome bc1 complex then forms a dimer. Heme b is required as a cofactor.

It localises to the mitochondrion inner membrane. Functionally, component of the ubiquinol-cytochrome c reductase complex (complex III or cytochrome b-c1 complex) that is part of the mitochondrial respiratory chain. The b-c1 complex mediates electron transfer from ubiquinol to cytochrome c. Contributes to the generation of a proton gradient across the mitochondrial membrane that is then used for ATP synthesis. The polypeptide is Cytochrome b (MT-CYB) (Corynorhinus rafinesquii (Rafinesque's big-eared bat)).